The chain runs to 529 residues: Neuronal acetylcholine receptor subunit alpha-2 (529 aa).

The N-terminal stretch at 1–26 is a signal peptide; sequence MGPSCPVFLSFTKLSLWWLLLTPAGG. The interval 27–56 is disordered; sequence EEAKRPPPRAPGDPLSSPSPTALPQGGSHT. Topologically, residues 27 to 264 are extracellular; sequence EEAKRPPPRA…VTYAFIIRRL (238 aa). N-linked (GlcNAc...) asparagine glycans are attached at residues N79 and N129. An intrachain disulfide couples C183 to C197. N-linked (GlcNAc...) asparagine glycosylation is present at N235. A disulfide bridge links C247 with C248. Helical transmembrane passes span 265 to 289, 297 to 315, and 331 to 352; these read PLFY…VFYL, ITLC…LLIT, and YLLF…VLNV. Residues 353 to 502 lie on the Cytoplasmic side of the membrane; the sequence is HHRSPSTHTM…WKYVAMVIDR (150 aa). The helical transmembrane segment at 503–521 threads the bilayer; it reads IFLWLFIIVCFLGTIGLFL.

It belongs to the ligand-gated ion channel (TC 1.A.9) family. Acetylcholine receptor (TC 1.A.9.1) subfamily. Alpha-2/CHRNA2 sub-subfamily. As to quaternary structure, neuronal AChR is composed of two different types of subunits: alpha and non-alpha (beta). CHRNA2/alpha-2 subunit can be combined to CHRNB2/beta-2 or CHRNB4/beta-4 to give rise to functional receptors. Both CHRNA2:CHRNB2 and CHRNA2:CHRNB4 nAChR complexes are heteropentamers with two subtypes: LS (low agonist sensitivity) with a (CHRNA2)3:(CHRNB2/4)2 and HS (high agonist sensitivity) with a (CHRNA2)2:(CHRNB2/4)3 stoichiometries; the subtypes differ in their subunit binding interfaces which are involved in ligand binding.

The protein localises to the synaptic cell membrane. Its subcellular location is the cell membrane. It catalyses the reaction Ca(2+)(in) = Ca(2+)(out). The enzyme catalyses K(+)(in) = K(+)(out). The catalysed reaction is Na(+)(in) = Na(+)(out). Functionally, component of neuronal acetylcholine receptors (nAChRs) that function as pentameric, ligand-gated cation channels with high calcium permeability among other activities. nAChRs are excitatory neurotrasnmitter receptors formed by a collection of nAChR subunits known to mediate synaptic transmission in the nervous system and the neuromuscular junction. Each nAchR subunit confers differential attributes to channel properties, including activation, deactivation and desensitization kinetics, pH sensitivity, cation permeability, and binding to allosteric modulators. CHRNA2 forms heteropentameric neuronal acetylcholine receptors with CHRNB2 and CHRNB4 and plays a role in nicotine dependence. The polypeptide is Neuronal acetylcholine receptor subunit alpha-2 (CHRNA2) (Pan troglodytes (Chimpanzee)).